We begin with the raw amino-acid sequence, 179 residues long: MARFQEFYKEKVVPGLIEKFGYKSVMEVPRITKITLNMGLGEAIADKKIIENAVGDLTKIAGQKPVVTKARKAIAGFKIRQGYPIGAMVTLRGQAMYEFLDRFVTVALPRVRDFRGVSGRAFDGRGNYNIGVKEQIIFPEIDYDKIDALRGLNISITTTAKTDDEAKALLASFKFPFRN.

It belongs to the universal ribosomal protein uL5 family. Part of the 50S ribosomal subunit; part of the 5S rRNA/L5/L18/L25 subcomplex. Contacts the 5S rRNA and the P site tRNA. Forms a bridge to the 30S subunit in the 70S ribosome.

This is one of the proteins that bind and probably mediate the attachment of the 5S RNA into the large ribosomal subunit, where it forms part of the central protuberance. In the 70S ribosome it contacts protein S13 of the 30S subunit (bridge B1b), connecting the 2 subunits; this bridge is implicated in subunit movement. Contacts the P site tRNA; the 5S rRNA and some of its associated proteins might help stabilize positioning of ribosome-bound tRNAs. The sequence is that of Large ribosomal subunit protein uL5 from Burkholderia cenocepacia (strain HI2424).